The primary structure comprises 317 residues: Aspartate carbamoyltransferase catalytic subunit (317 aa).

Residues arginine 66 and threonine 67 each contribute to the carbamoyl phosphate site. Lysine 94 is an L-aspartate binding site. Positions 116, 144, and 147 each coordinate carbamoyl phosphate. Arginine 177 and arginine 231 together coordinate L-aspartate. Glycine 272 and proline 273 together coordinate carbamoyl phosphate.

This sequence belongs to the aspartate/ornithine carbamoyltransferase superfamily. ATCase family. Heterododecamer (2C3:3R2) of six catalytic PyrB chains organized as two trimers (C3), and six regulatory PyrI chains organized as three dimers (R2).

It catalyses the reaction carbamoyl phosphate + L-aspartate = N-carbamoyl-L-aspartate + phosphate + H(+). It participates in pyrimidine metabolism; UMP biosynthesis via de novo pathway; (S)-dihydroorotate from bicarbonate: step 2/3. Functionally, catalyzes the condensation of carbamoyl phosphate and aspartate to form carbamoyl aspartate and inorganic phosphate, the committed step in the de novo pyrimidine nucleotide biosynthesis pathway. In Bradyrhizobium sp. (strain BTAi1 / ATCC BAA-1182), this protein is Aspartate carbamoyltransferase catalytic subunit.